Reading from the N-terminus, the 598-residue chain is Nuclear receptor subfamily 4 group A member 2 (598 aa).

The segment at 1-22 (MPCVQAQYGSSPQGASPASQGY) is disordered. The segment covering 7–18 (QYGSSPQGASPA) has biased composition (polar residues). Residues 260 to 335 (EGLCAVCGDN…VGMVKEVVRT (76 aa)) constitute a DNA-binding region (nuclear receptor). 2 NR C4-type zinc fingers span residues 263-283 (CAVC…CEGC) and 299-318 (CLAN…CQYC). A Bipartite nuclear localization signal (NLS1) motif is present at residues 287–314 (FKRTVQKNAKYVCLANKNCPVDKRRRNR). A disordered region spans residues 337–361 (SLKGRRGRLPSKPKSPQEPSPPSPP). A Nuclear localization signal (NLS1) motif is present at residues 338 to 350 (LKGRRGRLPSKPK). The segment covering 352–361 (PQEPSPPSPP) has biased composition (pro residues). In terms of domain architecture, NR LBD spans 360 to 595 (PPVSLISALV…AIIDKLFLDT (236 aa)). The nuclear export sequence (NES1) motif lies at 443–452 (FLELFVLRLA). A nuclear export sequence (NES2) motif is present at residues 568-577 (QGLQRIFYLK).

This sequence belongs to the nuclear hormone receptor family. As to quaternary structure, interacts with SFPQ, NCOR2, SIN3A and HADC1. The interaction with NCOR2 increases in the absence of PITX3. Interacts with PER2.

It localises to the cytoplasm. The protein localises to the nucleus. Its function is as follows. Transcriptional regulator which is important for the differentiation and maintenance of meso-diencephalic dopaminergic (mdDA) neurons during development. It is crucial for expression of a set of genes such as SLC6A3, SLC18A2, TH and DRD2 which are essential for development of mdDA neurons. This Pongo abelii (Sumatran orangutan) protein is Nuclear receptor subfamily 4 group A member 2 (NR4A2).